The chain runs to 170 residues: Arginine repressor (170 aa).

The protein belongs to the ArgR family.

The protein localises to the cytoplasm. Its pathway is amino-acid biosynthesis; L-arginine biosynthesis [regulation]. In terms of biological role, regulates arginine biosynthesis genes. This chain is Arginine repressor, found in Mycobacterium tuberculosis (strain ATCC 25177 / H37Ra).